Here is an 86-residue protein sequence, read N- to C-terminus: uncharacterized protein (86 aa).

The chain crosses the membrane as a helical span at residues 12 to 32 (IIFIFAIIIIVVLCVITYLYL).

It is found in the membrane. This is an uncharacterized protein from Escherichia coli (strain K12).